Here is a 357-residue protein sequence, read N- to C-terminus: Outer membrane protein YedS (357 aa).

The N-terminal stretch at 1–21 (MKRKVLAMLVPALLVAGAANA) is a signal peptide.

It belongs to the Gram-negative porin family.

It localises to the cell outer membrane. Forms pores that allow passive diffusion of small molecules across the outer membrane. Plays a role in resistance to carbapenems; this carbapenem-resistant, noncarbapenemase-producing clinical isolate has a deletion in ompF and a mutated marR gene that does not induce expression of this protein. However if this gene is overexpressed, or if wild-type marR is introduced, this leads to decreased resistance to the carbapenem antibiotics ertapenem, imipenem and meropenem. This Escherichia coli protein is Outer membrane protein YedS.